The sequence spans 344 residues: Glucan endo-1,3-beta-glucosidase (344 aa).

The first 27 residues, 1-27, serve as a signal peptide directing secretion; the sequence is MALTRNRPFVVVLLLGFVIMSTITIGA. The active-site Proton donor is the E123. E268 serves as the catalytic Nucleophile.

The protein belongs to the glycosyl hydrolase 17 family.

The enzyme catalyses Hydrolysis of (1-&gt;3)-beta-D-glucosidic linkages in (1-&gt;3)-beta-D-glucans.. Its function is as follows. Implicated in the defense of plants against pathogens. This is Glucan endo-1,3-beta-glucosidase from Vitis vinifera (Grape).